Reading from the N-terminus, the 208-residue chain is Glutathione S-transferase 2 (208 aa).

The region spanning 1–78 (MSYKLTYFSI…HLARKYNLNG (78 aa)) is the GST N-terminal domain. Residues Tyr-7, Lys-42, 49–50 (QL), and 62–63 (QS) each bind glutathione. A GST C-terminal domain is found at 80–200 (NEMETTYIDM…YCEKRDAAKV (121 aa)).

This sequence belongs to the GST superfamily. Pi family. In terms of assembly, homodimer. As to expression, hypodermis, wall of the seminal receptacle and spermatozoa of adult worms.

It catalyses the reaction RX + glutathione = an S-substituted glutathione + a halide anion + H(+). Appears to play a central role in the parasite detoxification system. The chain is Glutathione S-transferase 2 (GST2) from Onchocerca volvulus.